A 726-amino-acid polypeptide reads, in one-letter code: Probable cadmium-transporting ATPase (726 aa).

An HMA domain is found at 11 to 74 (DKQVYRVEGF…AGAFENLKVF (64 aa)). 2 residues coordinate Cd(2+): Cys-22 and Cys-25. The next 5 membrane-spanning stretches (helical) occupy residues 105-125 (STLL…FVNG), 129-149 (LVTS…LFKV), 163-179 (TLMT…GEWA), 335-355 (IIMV…GGSW), and 363-383 (LAVL…ISIV). The 4-aspartylphosphate intermediate role is filled by Asp-414. The next 2 helical transmembrane spans lie at 671–693 (LNII…LLVI) and 698–720 (TLWI…SLRL).

The protein belongs to the cation transport ATPase (P-type) (TC 3.A.3) family. Type IB subfamily.

It localises to the cell membrane. It carries out the reaction Cd(2+)(in) + ATP + H2O = Cd(2+)(out) + ADP + phosphate + H(+). Functionally, couples the hydrolysis of ATP with the export of cadmium. The sequence is that of Probable cadmium-transporting ATPase (cadA) from Staphylococcus aureus (strain MRSA252).